We begin with the raw amino-acid sequence, 230 residues long: Extracellular deoxyribonuclease (230 aa).

Residues 1 to 20 (MFRPLLSLCLALLVSAPAHA) form the signal peptide.

It belongs to the EndA/NucM nuclease family.

The protein resides in the secreted. The sequence is that of Extracellular deoxyribonuclease (dns) from Aeromonas hydrophila.